The primary structure comprises 246 residues: Phosphomannomutase (246 aa).

The active-site Nucleophile is the Asp-13. Mg(2+) is bound by residues Asp-13 and Asp-15. Asp-15 serves as the catalytic Proton donor/acceptor. Arg-22, Arg-124, Arg-135, Arg-142, Ser-180, and Asp-182 together coordinate alpha-D-mannose 1-phosphate. The Mg(2+) site is built by Asp-208, Tyr-220, and Thr-225.

It belongs to the eukaryotic PMM family. In terms of assembly, homodimer. The cofactor is Mg(2+). As to expression, expressed in roots, stems, leaves, flowers and immature fruits.

It localises to the cytoplasm. The enzyme catalyses alpha-D-mannose 1-phosphate = D-mannose 6-phosphate. It functions in the pathway nucleotide-sugar biosynthesis; GDP-alpha-D-mannose biosynthesis; alpha-D-mannose 1-phosphate from D-fructose 6-phosphate: step 2/2. Functionally, catalyzes the interconversion of mannose-6-phosphate to mannose-1-phosphate, the precursor for the synthesis of GDP-mannose. GDP-mannose is an essential sugar nucleotide for the synthesis of D-mannose-containing cell wall polysaccharides (galactomannans and glucomannans), glycolipids, glycoproteins and the antioxidant L-ascorbate. Can complement the yeast temperature-sensitive mutant sec53-6. The sequence is that of Phosphomannomutase from Arabidopsis thaliana (Mouse-ear cress).